Reading from the N-terminus, the 125-residue chain is Succinate dehydrogenase assembly factor 3, mitochondrial (125 aa).

Residues 1–42 (MRTTNHLYRTVHRQGKPLLPPLHLYRRILRAHRTFPPAQRAL) constitute a mitochondrion transit peptide.

The protein belongs to the complex I LYR family. SDHAF3 subfamily. As to quaternary structure, interacts with the iron-sulfur protein subunit within the SDH catalytic dimer.

It is found in the mitochondrion matrix. Plays an essential role in the assembly of succinate dehydrogenase (SDH), an enzyme complex (also referred to as respiratory complex II) that is a component of both the tricarboxylic acid (TCA) cycle and the mitochondrial electron transport chain, and which couples the oxidation of succinate to fumarate with the reduction of ubiquinone (coenzyme Q) to ubiquinol. Promotes maturation of the iron-sulfur protein subunit of the SDH catalytic dimer, protecting it from the deleterious effects of oxidants. May act together with SDHAF1. This Eremothecium gossypii (strain ATCC 10895 / CBS 109.51 / FGSC 9923 / NRRL Y-1056) (Yeast) protein is Succinate dehydrogenase assembly factor 3, mitochondrial.